Reading from the N-terminus, the 748-residue chain is Probable transcriptional regulator SLK1 (748 aa).

Disordered stretches follow at residues 67–93 (QHLP…RENN) and 138–163 (QQRL…QQQQ). Residues 71–81 (QQQQQQLLQQQ) show a composition bias toward low complexity. Residues 204 to 451 (PAENCITYWR…EQKIGPIEGL (248 aa)) form a dimerization region. Positions 213-227 (RKFVAEYFSPRAKQR) match the Nuclear localization signal motif. Residues 572–587 (NAMNNPNSNTGKQEGF) show a composition bias toward polar residues. Disordered regions lie at residues 572 to 653 (NAMN…GNTP) and 667 to 712 (ENGG…NNSF). The span at 588–606 (SSQNPTPNSNQSPSSSSQQ) shows a compositional bias: low complexity. Over residues 615 to 653 (FPNSPQMQQQQRTMNGPTNILPQNHPHQLQSPHSHGNTP) the composition is skewed to polar residues. The segment covering 667 to 686 (ENGGSVQQQQAFSGQSGSNS) has biased composition (low complexity). Positions 687-699 (NAERNTTASTSNI) are enriched in polar residues.

Belongs to the adn1/SEU family. In terms of assembly, forms corepressor complexes with LUH; LUH is the transcription repressor subunit and SLK1 the specific DNA-binding adapters. As to expression, expressed in young flower meristems, ovules and the carpel margin meristem.

It is found in the nucleus. Functionally, probable transcription regulator that functions in the development of the carpel margin meristem similarly to SEUSS (SEU). In association with SEU, supports organ development from meristematic regions by facilitating auxin response and thus organ initiation, and by sustaining meristematic potential through the maintenance of PHABULOSA expression. DNA-binding adapter subunit of the SEU-SLK1 transcriptional corepressor of abiotic stress (e.g. salt and osmotic stress) response genes. The sequence is that of Probable transcriptional regulator SLK1 (SLK1) from Arabidopsis thaliana (Mouse-ear cress).